The chain runs to 180 residues: Large ribosomal subunit protein uL6c (180 aa).

It belongs to the universal ribosomal protein uL6 family. In terms of assembly, part of the 50S ribosomal subunit.

Its subcellular location is the plastid. The protein localises to the chloroplast. Its function is as follows. Binds 23S rRNA. The protein is Large ribosomal subunit protein uL6c (rpl6) of Pyropia yezoensis (Susabi-nori).